The sequence spans 103 residues: NADH-quinone oxidoreductase subunit K 1 (103 aa).

3 helical membrane passes run 7–27 (ISWF…GFLF), 31–51 (IITV…SFVT), and 63–83 (LFTF…LAII).

The protein belongs to the complex I subunit 4L family. NDH-1 is composed of 14 different subunits. Subunits NuoA, H, J, K, L, M, N constitute the membrane sector of the complex.

The protein localises to the cell inner membrane. The enzyme catalyses a quinone + NADH + 5 H(+)(in) = a quinol + NAD(+) + 4 H(+)(out). Its function is as follows. NDH-1 shuttles electrons from NADH, via FMN and iron-sulfur (Fe-S) centers, to quinones in the respiratory chain. The immediate electron acceptor for the enzyme in this species is believed to be ubiquinone. Couples the redox reaction to proton translocation (for every two electrons transferred, four hydrogen ions are translocated across the cytoplasmic membrane), and thus conserves the redox energy in a proton gradient. This Solibacter usitatus (strain Ellin6076) protein is NADH-quinone oxidoreductase subunit K 1.